Here is a 161-residue protein sequence, read N- to C-terminus: Endoribonuclease YbeY (161 aa).

Zn(2+)-binding residues include histidine 120, histidine 124, and aspartate 130.

This sequence belongs to the endoribonuclease YbeY family. It depends on Zn(2+) as a cofactor.

Its subcellular location is the cytoplasm. Functionally, single strand-specific metallo-endoribonuclease involved in late-stage 70S ribosome quality control and in maturation of the 3' terminus of the 16S rRNA. The sequence is that of Endoribonuclease YbeY from Chlamydia trachomatis serovar A (strain ATCC VR-571B / DSM 19440 / HAR-13).